Consider the following 669-residue polypeptide: Heat shock 70 kDa protein BIP3 (669 aa).

Positions 1–32 (MARGATWTRRLHLHGLFLAVLLLLTLPAGSTA) are cleaved as a signal peptide. Asparagine 423 is a glycosylation site (N-linked (GlcNAc...) asparagine). Residues 646 to 669 (AVYQRSGGSRRDGDGGGDDDHDEL) form a disordered region. Residues 660 to 669 (GGGDDDHDEL) show a composition bias toward acidic residues. The short motif at 666 to 669 (HDEL) is the Prevents secretion from ER element.

It belongs to the heat shock protein 70 family.

Its subcellular location is the endoplasmic reticulum. Functionally, functions as a chaperone during endoplasmic reticulum (ER) stress response. This chain is Heat shock 70 kDa protein BIP3, found in Oryza sativa subsp. japonica (Rice).